The following is a 565-amino-acid chain: NAD-dependent malic enzyme (565 aa).

Catalysis depends on Tyr104, which acts as the Proton donor. Arg157 lines the NAD(+) pocket. The active-site Proton acceptor is Lys175. 3 residues coordinate a divalent metal cation: Glu246, Asp247, and Asp270. 2 residues coordinate NAD(+): Asp270 and Asn418.

Belongs to the malic enzymes family. As to quaternary structure, homotetramer. Mg(2+) is required as a cofactor. The cofactor is Mn(2+).

It catalyses the reaction (S)-malate + NAD(+) = pyruvate + CO2 + NADH. The enzyme catalyses oxaloacetate + H(+) = pyruvate + CO2. The sequence is that of NAD-dependent malic enzyme from Salmonella arizonae (strain ATCC BAA-731 / CDC346-86 / RSK2980).